A 201-amino-acid polypeptide reads, in one-letter code: Holliday junction branch migration complex subunit RuvA (201 aa).

Residues 1-64 (MYEYIKGKYI…QDFIGLYGFL (64 aa)) form a domain I region. The tract at residues 65 to 143 (TKDELEMFNK…STDISKGNSE (79 aa)) is domain II. Residues 144 to 154 (INNLDVDYDEH) are flexible linker. A domain III region spans residues 154–201 (HSKKLEEVRFALNSLGYSEKETDRAINNVDKSEGIENIIKSCLRFLMN).

This sequence belongs to the RuvA family. In terms of assembly, homotetramer. Forms an RuvA(8)-RuvB(12)-Holliday junction (HJ) complex. HJ DNA is sandwiched between 2 RuvA tetramers; dsDNA enters through RuvA and exits via RuvB. An RuvB hexamer assembles on each DNA strand where it exits the tetramer. Each RuvB hexamer is contacted by two RuvA subunits (via domain III) on 2 adjacent RuvB subunits; this complex drives branch migration. In the full resolvosome a probable DNA-RuvA(4)-RuvB(12)-RuvC(2) complex forms which resolves the HJ.

The protein localises to the cytoplasm. Functionally, the RuvA-RuvB-RuvC complex processes Holliday junction (HJ) DNA during genetic recombination and DNA repair, while the RuvA-RuvB complex plays an important role in the rescue of blocked DNA replication forks via replication fork reversal (RFR). RuvA specifically binds to HJ cruciform DNA, conferring on it an open structure. The RuvB hexamer acts as an ATP-dependent pump, pulling dsDNA into and through the RuvAB complex. HJ branch migration allows RuvC to scan DNA until it finds its consensus sequence, where it cleaves and resolves the cruciform DNA. This chain is Holliday junction branch migration complex subunit RuvA, found in Clostridium acetobutylicum (strain ATCC 824 / DSM 792 / JCM 1419 / IAM 19013 / LMG 5710 / NBRC 13948 / NRRL B-527 / VKM B-1787 / 2291 / W).